The primary structure comprises 239 residues: Orotidine 5'-phosphate decarboxylase (239 aa).

Substrate-binding positions include D12, K34, 61–70 (DLKFHDIPNT), T125, R188, Q197, G217, and R218. The Proton donor role is filled by K63.

Belongs to the OMP decarboxylase family. Type 1 subfamily. Homodimer.

The enzyme catalyses orotidine 5'-phosphate + H(+) = UMP + CO2. It participates in pyrimidine metabolism; UMP biosynthesis via de novo pathway; UMP from orotate: step 2/2. Its function is as follows. Catalyzes the decarboxylation of orotidine 5'-monophosphate (OMP) to uridine 5'-monophosphate (UMP). In Syntrophomonas wolfei subsp. wolfei (strain DSM 2245B / Goettingen), this protein is Orotidine 5'-phosphate decarboxylase.